We begin with the raw amino-acid sequence, 108 residues long: Small ribosomal subunit protein bS6 (108 aa).

This sequence belongs to the bacterial ribosomal protein bS6 family.

In terms of biological role, binds together with bS18 to 16S ribosomal RNA. This is Small ribosomal subunit protein bS6 from Dichelobacter nodosus (strain VCS1703A).